Here is a 187-residue protein sequence, read N- to C-terminus: Probable carboxylesterase Culp7 (187 aa).

Cys15 and Cys69 form a disulfide bridge. Residue Ser80 is the Nucleophile of the active site. Residues Cys151 and Cys158 are joined by a disulfide bond. Asp155 is a catalytic residue. The active-site Proton donor/acceptor is His167.

Belongs to the cutinase family.

Its subcellular location is the cytoplasm. The protein localises to the cell membrane. It is found in the secreted. It localises to the cell wall. May have a role in cell wall processes. Does not exhibit cutinase activity. This is Probable carboxylesterase Culp7 from Mycobacterium tuberculosis (strain ATCC 25618 / H37Rv).